The sequence spans 64 residues: Putative neurotoxin-H (64 aa).

The N-terminal stretch at 1–19 (MYATVTVTVLLLISSGIFC) is a signal peptide. Disulfide bonds link cysteine 25–cysteine 45, cysteine 32–cysteine 54, and cysteine 36–cysteine 56.

Expressed by the venom gland.

It localises to the secreted. This chain is Putative neurotoxin-H, found in Lychas mucronatus (Chinese swimming scorpion).